Reading from the N-terminus, the 124-residue chain is Darcynin homolog (124 aa).

The protein belongs to the darcynin family.

The sequence is that of Darcynin homolog from Granulibacter bethesdensis (strain ATCC BAA-1260 / CGDNIH1).